The primary structure comprises 127 residues: MRHRKSGRQLNRNSSHRQAMFRNMASALIGHEIIKTTLPKAKELRRVVEPLITLAKEDSVANRRLAFARTRNIETVAKLFNELGPRFAQRAGGYTRILKCGFRAGDNAPMAYIELVDRPEVAEVTAE.

This sequence belongs to the bacterial ribosomal protein bL17 family. In terms of assembly, part of the 50S ribosomal subunit. Contacts protein L32.

This chain is Large ribosomal subunit protein bL17, found in Haemophilus ducreyi (strain 35000HP / ATCC 700724).